A 398-amino-acid polypeptide reads, in one-letter code: GATA transcription factor 21 (398 aa).

Residues 20–51 are disordered; it reads QPFFYPLGSSSSLHHHHHHHHHQVPSNSSSSS. The span at 32–42 shows a compositional bias: basic residues; that stretch reads LHHHHHHHHHQ. The short motif at 109–116 is the Nuclear localization signal element; it reads PKKETRLK. Positions 122–144 are disordered; the sequence is KDHEDQPHPLHQNPTKPDSDSDK. The GATA-type zinc finger occupies 226–280; it reads NGVIRVCSDCNTTKTPLWRSGPRGPKSLCNACGIRQRKARRAAMAAAAAAGDQEV. The tract at residues 289 to 353 is disordered; sequence LPLKKKLQNK…KSTTSSNSSI (65 aa). Residues 291–302 show a composition bias toward basic residues; sequence LKKKLQNKKKRS. Over residues 343–353 the composition is skewed to low complexity; the sequence is SKSTTSSNSSI.

It belongs to the type IV zinc-finger family. Class B subfamily. As to quaternary structure, interacts with SNL1. Forms heterodimers with GATA18. In terms of tissue distribution, expressed predominantly in leaves, and barely in stems, flowers and siliques.

The protein localises to the nucleus. In terms of biological role, transcriptional regulator that specifically binds 5'-GATA-3' or 5'-GAT-3' motifs within gene promoters. Involved in the modulation of chloroplast development, growth and division in a cytokinin-dependent manner. Repressor of the gibberellic acid (GA) signaling pathway that represses flowering and modulates greening, in a SOC1-dependent manner. Prevents the accumulation of SOC1 during flowering. Promotes chlorophyll biosynthesis throughout the plant, by regulating chlorophyll biosynthetic genes (e.g. HEMA1 and GUN4) and chloroplast localized glutamate synthase (e.g. GLU1). Involved in the regulation of sugar-sensing genes (e.g. HXK1, HXK2, STP13 and PLT6). Regulator of germination, senescence, elongation growth and flowering time. Also influences leaf starch content. This chain is GATA transcription factor 21, found in Arabidopsis thaliana (Mouse-ear cress).